A 495-amino-acid chain; its full sequence is Ribosomal protein uS12 methylthiotransferase RimO (495 aa).

Positions Arg5–Asn121 constitute an MTTase N-terminal domain. Cys14, Cys50, and Cys84 together coordinate [4Fe-4S] cluster. Residues Gln145–Arg183 form a disordered region. A Radical SAM core domain is found at Leu184–Arg415. [4Fe-4S] cluster-binding residues include Cys198, Cys202, and Cys205. A TRAM domain is found at Glu417–Pro484.

This sequence belongs to the methylthiotransferase family. RimO subfamily. It depends on [4Fe-4S] cluster as a cofactor.

Its subcellular location is the cytoplasm. It catalyses the reaction L-aspartate(89)-[ribosomal protein uS12]-hydrogen + (sulfur carrier)-SH + AH2 + 2 S-adenosyl-L-methionine = 3-methylsulfanyl-L-aspartate(89)-[ribosomal protein uS12]-hydrogen + (sulfur carrier)-H + 5'-deoxyadenosine + L-methionine + A + S-adenosyl-L-homocysteine + 2 H(+). Its function is as follows. Catalyzes the methylthiolation of an aspartic acid residue of ribosomal protein uS12. This Streptomyces avermitilis (strain ATCC 31267 / DSM 46492 / JCM 5070 / NBRC 14893 / NCIMB 12804 / NRRL 8165 / MA-4680) protein is Ribosomal protein uS12 methylthiotransferase RimO.